The sequence spans 802 residues: LPS-assembly protein LptD (802 aa).

An N-terminal signal peptide occupies residues 1–25 (MARLFSLKPLVLALGLCFGTHCAAA).

Belongs to the LptD family. Component of the lipopolysaccharide transport and assembly complex. Interacts with LptE and LptA.

It localises to the cell outer membrane. Functionally, together with LptE, is involved in the assembly of lipopolysaccharide (LPS) at the surface of the outer membrane. This Neisseria meningitidis serogroup B (strain ATCC BAA-335 / MC58) protein is LPS-assembly protein LptD.